The primary structure comprises 383 residues: Anhydro-N-acetylmuramic acid kinase (383 aa).

Residue 9 to 16 (GTSLDGID) coordinates ATP.

It belongs to the anhydro-N-acetylmuramic acid kinase family.

The catalysed reaction is 1,6-anhydro-N-acetyl-beta-muramate + ATP + H2O = N-acetyl-D-muramate 6-phosphate + ADP + H(+). The protein operates within amino-sugar metabolism; 1,6-anhydro-N-acetylmuramate degradation. Its pathway is cell wall biogenesis; peptidoglycan recycling. In terms of biological role, catalyzes the specific phosphorylation of 1,6-anhydro-N-acetylmuramic acid (anhMurNAc) with the simultaneous cleavage of the 1,6-anhydro ring, generating MurNAc-6-P. Is required for the utilization of anhMurNAc either imported from the medium or derived from its own cell wall murein, and thus plays a role in cell wall recycling. This chain is Anhydro-N-acetylmuramic acid kinase, found in Bacillus cereus (strain ATCC 10987 / NRS 248).